The chain runs to 1025 residues: Exocyst complex component 6 (1025 aa).

2 stretches are compositionally biased toward basic and acidic residues: residues 1-10 (MSNKKQKEEI) and 22-52 (MVRDKDKEQKEEKREKKEKKRLEKKEAENVK). 3 disordered regions span residues 1-122 (MSNK…TRHL), 135-154 (LSSQDRSSSLPHSSQDDQAK), and 666-691 (QFGDKNLNNNNNNDDDDDYFDEDENE). Residues 19-68 (LKTMVRDKDKEQKEEKREKKEKKRLEKKEAENVKKEKKKEKKELKKIGKA) are a coiled coil. The segment covering 71–93 (SGSITSDSSTHSGAQEFDSYGND) has biased composition (low complexity). Polar residues predominate over residues 104 to 118 (SIDSNGLSSSGQPMQ). 2 stretches are compositionally biased toward low complexity: residues 135–147 (LSSQDRSSSLPHS) and 666–677 (QFGDKNLNNNNN). Acidic residues predominate over residues 678-691 (NDDDDDYFDEDENE).

It belongs to the SEC15 family. In terms of assembly, the exocyst complex is composed of sec3/exoc1, sec5/exoc2, sec6/exoc3, sec8/exoc4, sec10/exoc5, sec15/exoc6, exo70/exoc7 and exo84/exoc8.

It is found in the cytoplasm. The protein localises to the perinuclear region. The protein resides in the midbody. It localises to the midbody ring. Functionally, component of the exocyst complex involved in the docking of exocytic vesicles with fusion sites on the plasma membrane. This is Exocyst complex component 6 (exoc6) from Dictyostelium discoideum (Social amoeba).